We begin with the raw amino-acid sequence, 365 residues long: Peptide chain release factor 2 (365 aa).

N5-methylglutamine is present on Gln-252.

The protein belongs to the prokaryotic/mitochondrial release factor family. Post-translationally, methylated by PrmC. Methylation increases the termination efficiency of RF2.

The protein localises to the cytoplasm. In terms of biological role, peptide chain release factor 2 directs the termination of translation in response to the peptide chain termination codons UGA and UAA. This chain is Peptide chain release factor 2, found in Aeromonas salmonicida (strain A449).